The primary structure comprises 142 residues: NTF2-related export protein 2 (142 aa).

The NTF2 domain occupies 17 to 136 (AAEEFVNIYY…WKIASDCFRF (120 aa)).

In terms of assembly, associates with NXF1, NXF2, NXF3 and NXF5.

Its subcellular location is the nucleus. The protein resides in the cytoplasm. Functionally, regulator of protein export for NES-containing proteins. Also plays a role in mRNA nuclear export. The protein is NTF2-related export protein 2 (NXT2) of Bos taurus (Bovine).